Reading from the N-terminus, the 598-residue chain is Elongation factor 4 (598 aa).

The region spanning 4-181 is the tr-type G domain; sequence SKIRNFSIIA…AVIEKIPAPK (178 aa). GTP is bound by residues 16 to 21 and 128 to 131; these read DHGKST and NKID.

The protein belongs to the TRAFAC class translation factor GTPase superfamily. Classic translation factor GTPase family. LepA subfamily.

The protein localises to the cell membrane. It catalyses the reaction GTP + H2O = GDP + phosphate + H(+). Required for accurate and efficient protein synthesis under certain stress conditions. May act as a fidelity factor of the translation reaction, by catalyzing a one-codon backward translocation of tRNAs on improperly translocated ribosomes. Back-translocation proceeds from a post-translocation (POST) complex to a pre-translocation (PRE) complex, thus giving elongation factor G a second chance to translocate the tRNAs correctly. Binds to ribosomes in a GTP-dependent manner. This is Elongation factor 4 from Mycoplasma mobile (strain ATCC 43663 / 163K / NCTC 11711) (Mesomycoplasma mobile).